Here is a 3034-residue protein sequence, read N- to C-terminus: Cadherin EGF LAG seven-pass G-type receptor 1 (3034 aa).

The first 29 residues, 1–29, serve as a signal peptide directing secretion; that stretch reads MAPSSPRVLPALVLLAAAALPALELGAAA. Topologically, residues 30 to 2484 are extracellular; the sequence is WELRVPGGAR…REHGEVLPLK (2455 aa). The segment covering 222 to 243 has biased composition (low complexity); that stretch reads GTPSESPSVSPSLLNLSQPRAG. Residues 222 to 267 are disordered; sequence GTPSESPSVSPSLLNLSQPRAGVVRRSRRGTGSSTSPQFPLPSYQV. The N-linked (GlcNAc...) asparagine glycan is linked to asparagine 236. 9 consecutive Cadherin domains span residues 261 to 368, 369 to 474, 475 to 580, 581 to 702, 703 to 804, 805 to 907, 908 to 1014, 1015 to 1116, and 1121 to 1239; these read PLPS…SPVF, EQSE…YPQF, SEKR…APIF, VSSP…DPMF, TQPV…RPVF, QSSH…APRF, LRDF…PPVF, EKDE…PPEL, and ILFN…SPLL. Asparagine 561, asparagine 649, and asparagine 793 each carry an N-linked (GlcNAc...) asparagine glycan. N-linked (GlcNAc...) asparagine glycans are attached at residues asparagine 1129, asparagine 1154, asparagine 1228, asparagine 1264, asparagine 1274, and asparagine 1302. Positions 1318–1376 constitute an EGF-like 1; calcium-binding domain; that stretch reads DDNICLREPCENYMKCVSVLRFDSSAPFISSTTVLFRPIHPITGLRCRCPPGFTGDYCE. Disulfide bonds link cysteine 1322–cysteine 1333, cysteine 1327–cysteine 1364, cysteine 1366–cysteine 1375, cysteine 1382–cysteine 1393, cysteine 1387–cysteine 1402, cysteine 1404–cysteine 1413, cysteine 1422–cysteine 1433, cysteine 1427–cysteine 1443, and cysteine 1445–cysteine 1455. The 37-residue stretch at 1378 to 1414 folds into the EGF-like 2; calcium-binding domain; that stretch reads EIDLCYSNPCGANGRCRSREGGYTCECFEDFTGEHCQ. The 39-residue stretch at 1418–1456 folds into the EGF-like 3; calcium-binding domain; the sequence is RSGRCASGVCKNGGTCVNLLIGGFHCVCPPGEYEHPYCE. Positions 1457 to 1661 constitute a Laminin G-like 1 domain; the sequence is VSTRSFPPQS…IANNGTRAGC (205 aa). Asparagine 1591, asparagine 1638, and asparagine 1655 each carry an N-linked (GlcNAc...) asparagine glycan. 13 disulfide bridges follow: cysteine 1635–cysteine 1661, cysteine 1668–cysteine 1679, cysteine 1673–cysteine 1688, cysteine 1690–cysteine 1699, cysteine 1855–cysteine 1885, cysteine 1891–cysteine 1902, cysteine 1896–cysteine 1911, cysteine 1913–cysteine 1922, cysteine 1926–cysteine 1937, cysteine 1931–cysteine 1949, cysteine 1951–cysteine 1960, cysteine 1968–cysteine 1981, and cysteine 1983–cysteine 1993. Residues 1664–1700 enclose the EGF-like 4; calcium-binding domain; sequence QRNFCDGTSCQNGGTCVNRWNTYLCECPLRFGGKNCE. Asparagine 1681 carries the post-translational modification (3R)-3-hydroxyasparagine. The 182-residue stretch at 1704-1885 folds into the Laminin G-like 2 domain; that stretch reads PHPQRFTGES…ALKVRVKDGC (182 aa). Residues 1887-1922 enclose the EGF-like 5; calcium-binding domain; sequence VEDPCASSPCPPHSHCRDTWDSYSCICDRGYFGKKC. The residue at position 1904 (aspartate 1904) is a (3R)-3-hydroxyaspartate. An EGF-like 6; calcium-binding domain is found at 1923-1961; that stretch reads VDACLLNPCKHVAACVRSPNTPRGYSCECGPGHYGQYCE. The EGF-like 7; calcium-binding domain occupies 1962-1994; it reads NKVDLPCPKGWWGNPVCGPCHCAVSQGFDPDCN. Asparagine 1994 is a glycosylation site (N-linked (GlcNAc...) asparagine). Positions 1996-2031 constitute an EGF-like 8; calcium-binding domain; that stretch reads TNGQCQCKENYYKPPAQDACLPCDCFPHGSHSRACD. Disulfide bonds link cysteine 2000–cysteine 2015, cysteine 2002–cysteine 2018, cysteine 2020–cysteine 2030, cysteine 2039–cysteine 2048, and cysteine 2051–cysteine 2063. The Laminin EGF-like domain maps to 2018–2065; sequence CDCFPHGSHSRACDMDTGQCACKPGVIGRQCNRCDNPFAEVTSLGCEV. N-linked (GlcNAc...) asparagine glycosylation is found at asparagine 2118, asparagine 2137, asparagine 2144, asparagine 2155, asparagine 2160, and asparagine 2272. The interval 2295 to 2346 is disordered; that stretch reads SVSFPADTFKPPEKKEGPVVRLTNRRTTPLTAQPEPRAERETSSSRRRRHPD. Residues 2312-2476 form the GAIN-B domain; it reads PVVRLTNRRT…AVLMDISRRE (165 aa). Cystine bridges form between cysteine 2426-cysteine 2458 and cysteine 2446-cysteine 2460. The tract at residues 2426-2476 is GPS; sequence CVFWNHSLDTGGTGGWSAKGCELLSRNRTHVTCQCSHSASCAVLMDISRRE. N-linked (GlcNAc...) asparagine glycans are attached at residues asparagine 2430 and asparagine 2452. A helical membrane pass occupies residues 2485-2505; the sequence is IITYAALSLSLVALLVAFVLL. Residues 2506-2516 lie on the Cytoplasmic side of the membrane; sequence SLVRTLRSNLH. A helical membrane pass occupies residues 2517–2537; that stretch reads SIHKNLITALFFSQLIFMVGI. N-linked (GlcNAc...) asparagine glycosylation is present at asparagine 2538. At 2538 to 2542 the chain is on the extracellular side; the sequence is NQTEN. The helical transmembrane segment at 2543-2563 threads the bilayer; sequence PFLCTVVAILLHYVSMGTFAW. Over 2564 to 2587 the chain is Cytoplasmic; it reads TLVENLHVYRMLTEVRNIDTGPMR. A helical membrane pass occupies residues 2588–2608; it reads FYHVVGWGIPAIVTGLAVGLD. Residues 2609–2625 are Extracellular-facing; it reads PQGYGNPDFCWLSLQDT. The chain crosses the membrane as a helical span at residues 2626-2646; sequence LIWSFAGPVGTVIIINTVIFV. Residues 2647–2670 are Cytoplasmic-facing; it reads LSAKVSCQRKHHYYERKGVVSMLR. The helical transmembrane segment at 2671–2691 threads the bilayer; that stretch reads TAFLLLLLVTATWLLGLLAVN. Topologically, residues 2692–2694 are extracellular; the sequence is SDT. The helical transmembrane segment at 2695 to 2715 threads the bilayer; the sequence is LSFHYLFAAFSCLQGIFVLLF. At 2716-3034 the chain is on the cytoplasmic side; sequence HCVAHREVRK…QANGSDSEKP (319 aa). The disordered stretch occupies residues 2774-3034; it reads TASLDSTTRD…QANGSDSEKP (261 aa). Residues serine 2776, serine 2779, serine 2886, and serine 2888 each carry the phosphoserine modification. Residues 2893-2909 show a composition bias toward basic and acidic residues; sequence TEPHLKVETKVSVELHR. Residues 2976-2986 show a composition bias toward low complexity; it reads SPTSSRTSSLG. A compositionally biased stretch (basic and acidic residues) spans 3003-3012; that stretch reads PRREPGREHL. Over residues 3020–3034 the composition is skewed to polar residues; the sequence is RTGSAQANGSDSEKP.

Belongs to the G-protein coupled receptor 2 family. LN-TM7 subfamily. In terms of processing, the iron and 2-oxoglutarate dependent 3-hydroxylation of aspartate and asparagine is (R) stereospecific within EGF domains. Expressed in the brain, where it is localized principally in the ependymal cell layer, choroid plexus and the area postrema. Also found in spinal cord and in the eye.

Its subcellular location is the cell membrane. In terms of biological role, receptor that may have an important role in cell/cell signaling during nervous system formation. The chain is Cadherin EGF LAG seven-pass G-type receptor 1 (Celsr1) from Mus musculus (Mouse).